Here is a 746-residue protein sequence, read N- to C-terminus: Teichoic acid poly(glycerol phosphate) polymerase (746 aa).

CDP-glycerol contacts are provided by residues 473-477, Arg540, 573-574, 610-612, 652-653, and Asp657; these read WHGTP, PT, RMH, and SS.

It belongs to the CDP-glycerol glycerophosphotransferase family.

The protein resides in the cell membrane. It carries out the reaction 4-O-[(2R)-glycerylphospho]-N-acetyl-beta-D-mannosaminyl-(1-&gt;4)-N-acetyl-alpha-D-glucosaminyl di-trans,octa-cis-undecaprenyl diphosphate + n CDP-glycerol = 4-O-{[(2R)-1-glycerylphospho](n)-(2R)-1-glycerylphospho}-N-acetyl-beta-D-mannosaminyl-(1-&gt;4)-N-acetyl-alpha-D-glucosaminyl undecaprenyl diphosphate + n CMP + n H(+). Its pathway is cell wall biogenesis; poly(glycerol phosphate) teichoic acid biosynthesis. In terms of biological role, responsible for the polymerization of the main chain of the major teichoic acid by sequential transfer of glycerol phosphate units from CDP-glycerol to the disaccharide linkage unit. Synthesizes polymers of approximately 35 glycerol phosphate units in length. The sequence is that of Teichoic acid poly(glycerol phosphate) polymerase (tagF) from Bacillus subtilis (strain 168).